The following is a 363-amino-acid chain: MSHRDHGADGWESADFPITCESCFGDNPYMRMTRADYDKECKICSRPFTAFRWRPGRNARFKKTEICQTCSKLKNVCQVCLLDLGFGLPVQVRDSALNINSHYSVPMSHVNREYFADEHDPKTRAGLDYESSFGKMQPNDTILKLQRRTPSYEKNRPKICSFYTIGQCKRGAECSFRHEMPETGELSHQNIRDRYYSVNDPVAMKLLRKAGEMGTLEPPEDESIKTLYVGGLNSRIFEQDIHDHFYAYGEMESIRVMAEDGKYDQSGSNQQQQGSIAHTGLISQQQNQHSQMQQYYMQPPPPNEYSHYPSMDTQRMGAAFSTQESDGSSTSENNRAYSSYSYPMPPHQPYPTPPPYIDIYIYI.

The C3H1-type zinc finger occupies Lys154–Pro181. The RRM domain maps to Lys225 to Ser310. Residues Leu281–Gln348 are disordered. Residues Ser283–Met297 show a composition bias toward low complexity. Positions Phe320–Ala336 are enriched in polar residues.

The polypeptide is Zinc finger CCCH domain-containing protein 53 (Arabidopsis thaliana (Mouse-ear cress)).